Here is a 346-residue protein sequence, read N- to C-terminus: Peripherin-2 (346 aa).

The Cytoplasmic portion of the chain corresponds to 1–24 (MALLKVKFDQKKRVKLAQGLWLMN). Residues 25-43 (WLSVLAGIVLFSLGLFLKI) traverse the membrane as a helical segment. Residues 44–61 (ELRKRSEVMNNSESHFVP) are Lumenal-facing. An N-linked (GlcNAc...) asparagine glycan is attached at N53. The chain crosses the membrane as a helical span at residues 62–80 (NSLIGVGVLSCVFNSLAGK). The Cytoplasmic segment spans residues 81-99 (ICYDALDPAKYAKWKPWLK). Residues 100–123 (PYLAVCIFFNVILFLVALCCFLLR) form a helical membrane-spanning segment. At 124-264 (GSLESTLAYG…LNYYSSLMNS (141 aa)) the chain is on the lumenal side. N-linked (GlcNAc...) asparagine glycosylation occurs at N229. A helical transmembrane segment spans residues 265–290 (MGVVTLLVWLFEVSITAGLRYLHTAL). Residues 291–346 (ESVSNPEDPECESEGWLLEKSVPETWKAFLESFKKLGKSNQVEAEGADAGPAPEAG) are Cytoplasmic-facing. The interaction with MREG stretch occupies residues 341 to 346 (PAPEAG).

The protein belongs to the PRPH2/ROM1 family. Homodimer; disulfide-linked. Forms a homotetramer. Forms a heterotetramer with ROM1. Homotetramer and heterotetramer core complexes go on to form higher order complexes by formation of intermolecular disulfide bonds. Interacts with MREG. Interacts with STX3 isoform 3B. Interacts with SNAP25. As to expression, expressed in the retina (at protein level).

It is found in the membrane. Its subcellular location is the cell projection. It localises to the cilium. The protein resides in the photoreceptor outer segment. The protein localises to the photoreceptor inner segment. Essential for retina photoreceptor outer segment disk morphogenesis, may also play a role with ROM1 in the maintenance of outer segment disk structure. Required for the maintenance of retinal outer nuclear layer thickness. Required for the correct development and organization of the photoreceptor inner segment. The polypeptide is Peripherin-2 (Prph2) (Mus musculus (Mouse)).